The chain runs to 251 residues: DNA repair protein RecO (251 aa).

It belongs to the RecO family.

Functionally, involved in DNA repair and RecF pathway recombination. In Nitratidesulfovibrio vulgaris (strain ATCC 29579 / DSM 644 / CCUG 34227 / NCIMB 8303 / VKM B-1760 / Hildenborough) (Desulfovibrio vulgaris), this protein is DNA repair protein RecO.